A 277-amino-acid chain; its full sequence is NAD kinase (277 aa).

Residue aspartate 55 is the Proton acceptor of the active site. Residues 55-56, 131-132, arginine 157, aspartate 159, and 170-175 contribute to the NAD(+) site; these read DG, NE, and TAYNKS.

This sequence belongs to the NAD kinase family. A divalent metal cation is required as a cofactor.

It localises to the cytoplasm. It carries out the reaction NAD(+) + ATP = ADP + NADP(+) + H(+). Its function is as follows. Involved in the regulation of the intracellular balance of NAD and NADP, and is a key enzyme in the biosynthesis of NADP. Catalyzes specifically the phosphorylation on 2'-hydroxyl of the adenosine moiety of NAD to yield NADP. This Streptococcus mutans serotype c (strain ATCC 700610 / UA159) protein is NAD kinase.